The sequence spans 485 residues: Bifunctional protein HldE (485 aa).

The segment at 1-326 is ribokinase; that stretch reads MDFSSTRVLC…AELDESAISN (326 aa). 195 to 198 serves as a coordination point for ATP; it reads NVKE. Aspartate 271 is an active-site residue. Residues 354-485 form a cytidylyltransferase region; the sequence is FTNGCFDILH…GIVKKISTLT (132 aa).

It in the N-terminal section; belongs to the carbohydrate kinase PfkB family. This sequence in the C-terminal section; belongs to the cytidylyltransferase family. In terms of assembly, homodimer.

The enzyme catalyses D-glycero-beta-D-manno-heptose 7-phosphate + ATP = D-glycero-beta-D-manno-heptose 1,7-bisphosphate + ADP + H(+). The catalysed reaction is D-glycero-beta-D-manno-heptose 1-phosphate + ATP + H(+) = ADP-D-glycero-beta-D-manno-heptose + diphosphate. It functions in the pathway nucleotide-sugar biosynthesis; ADP-L-glycero-beta-D-manno-heptose biosynthesis; ADP-L-glycero-beta-D-manno-heptose from D-glycero-beta-D-manno-heptose 7-phosphate: step 1/4. The protein operates within nucleotide-sugar biosynthesis; ADP-L-glycero-beta-D-manno-heptose biosynthesis; ADP-L-glycero-beta-D-manno-heptose from D-glycero-beta-D-manno-heptose 7-phosphate: step 3/4. Its function is as follows. Catalyzes the phosphorylation of D-glycero-D-manno-heptose 7-phosphate at the C-1 position to selectively form D-glycero-beta-D-manno-heptose-1,7-bisphosphate. Functionally, catalyzes the ADP transfer from ATP to D-glycero-beta-D-manno-heptose 1-phosphate, yielding ADP-D-glycero-beta-D-manno-heptose. This Granulibacter bethesdensis (strain ATCC BAA-1260 / CGDNIH1) protein is Bifunctional protein HldE.